The following is a 182-amino-acid chain: UPF0397 protein BCAH187_A2708 (182 aa).

5 helical membrane passes run 9–29 (VVAIGIGAALYGILGLWGFSI), 40–60 (AILTVFGALFGPVAGLLIGLI), 71–91 (WGIWWGWVISSGIIGFAMGFI), 114–134 (ITGLIGIVIAIIFAGAFDIIV), and 142–162 (IVIQVLGATIADVIVFLVLGL).

The protein belongs to the UPF0397 family.

The protein localises to the cell membrane. The polypeptide is UPF0397 protein BCAH187_A2708 (Bacillus cereus (strain AH187)).